Consider the following 241-residue polypeptide: Beta-casein (241 aa).

A signal peptide spans 1 to 15 (MKILILACLVALALA). The segment at 21 to 45 (LNVSSETVESLSSNEPDSSSEESIT) is disordered. The residue at position 24 (serine 24) is a Phosphoserine; in form 4-P, form 5-P, form 6-P and form 7-P. A Phosphoserine; in form 7-P modification is found at serine 25. A Phosphothreonine; in form 6-P and form 7-P modification is found at threonine 27. Phosphoserine is present on residues serine 30 and serine 32. Phosphoserine; in form 5-P, form 6-P and form 7-P is present on serine 33. Phosphoserine; in form 4-P, form 5-P, form 6-P and form 7-P is present on residues serine 38, serine 39, and serine 40. At asparagine 150 the chain carries Deamidated asparagine.

The protein belongs to the beta-casein family. In terms of processing, there are at least five different forms found in milk, with varying degrees of phosphorylation. These include form 3-P which is phosphorylated at three sites that have not been determined, this form is present in very low amounts, form 4-P which is phosphorylated at four sites, form 5-P which is phosphorylated at five sites, form 6-P which is phosphorylated at six sites, and form 7-P which is phosphorylated at seven sites. Post-translationally, spontaneous deamidation of Asn-150 produces aspartate or isoaspartate. In terms of tissue distribution, mammary gland specific. Secreted in milk.

The protein resides in the secreted. In terms of biological role, important role in determination of the surface properties of the casein micelles. The sequence is that of Beta-casein from Equus caballus (Horse).